A 211-amino-acid chain; its full sequence is Probable nicotinate-nucleotide adenylyltransferase (211 aa).

The protein belongs to the NadD family.

The catalysed reaction is nicotinate beta-D-ribonucleotide + ATP + H(+) = deamido-NAD(+) + diphosphate. It functions in the pathway cofactor biosynthesis; NAD(+) biosynthesis; deamido-NAD(+) from nicotinate D-ribonucleotide: step 1/1. Its function is as follows. Catalyzes the reversible adenylation of nicotinate mononucleotide (NaMN) to nicotinic acid adenine dinucleotide (NaAD). This chain is Probable nicotinate-nucleotide adenylyltransferase, found in Legionella pneumophila (strain Paris).